The primary structure comprises 185 residues: Protein FAM219A (185 aa).

Methionine 1 is modified (N-acetylmethionine). Residues 1-131 (MMEEIDRFQV…SRYSSSGYSS (131 aa)) are disordered. Position 47 is a phosphoserine (serine 47). The segment covering 52–61 (KLEKQRELAR) has biased composition (basic and acidic residues). A compositionally biased stretch (polar residues) spans 66-80 (KNGSMGSPVNQQPKK). A phosphoserine mark is found at serine 72 and serine 102. Residue threonine 113 is modified to Phosphothreonine. 2 positions are modified to phosphoserine: serine 115 and serine 122. Residues 122-131 (SRYSSSGYSS) show a composition bias toward low complexity.

Belongs to the FAM219 family.

In Homo sapiens (Human), this protein is Protein FAM219A (FAM219A).